A 70-amino-acid polypeptide reads, in one-letter code: Conotoxin Lt11.2 (70 aa).

A signal peptide spans Met-1–Ala-26. Intrachain disulfides connect Cys-27–Cys-41, Cys-34–Cys-46, Cys-40–Cys-50, and Cys-45–Cys-54. Pro-57 is modified (proline amide). Residues Glu-61 to Arg-70 constitute a propeptide that is removed on maturation.

It belongs to the conotoxin I2 superfamily. Expressed by the venom duct.

Its subcellular location is the secreted. The protein is Conotoxin Lt11.2 of Conus litteratus (Lettered cone).